Reading from the N-terminus, the 138-residue chain is Single-stranded DNA-binding protein 3 (138 aa).

The region spanning 1–104 (MINNIVLVGR…VVAENFQLLE (104 aa)) is the SSB domain. Over residues 105–121 (SRNSQQQTNQSGNSSNS) the composition is skewed to low complexity. The disordered stretch occupies residues 105–138 (SRNSQQQTNQSGNSSNSYFGNANKMDISDDDLPF). The Important for interaction with partner proteins motif lies at 133-138 (DDDLPF).

Homotetramer.

In terms of biological role, plays an important role in DNA replication, recombination and repair. Binds to ssDNA and to an array of partner proteins to recruit them to their sites of action during DNA metabolism. In Streptococcus agalactiae serotype V (strain ATCC BAA-611 / 2603 V/R), this protein is Single-stranded DNA-binding protein 3 (ssb3).